A 391-amino-acid polypeptide reads, in one-letter code: Processive diacylglycerol beta-glucosyltransferase (391 aa).

This sequence belongs to the glycosyltransferase 28 family. UgtP subfamily.

It localises to the cell membrane. The catalysed reaction is a 1,2-diacyl-3-O-(beta-D-glucopyranosyl)-sn-glycerol + UDP-alpha-D-glucose = a 1,2-diacyl-3-O-(beta-D-Glc-(1-&gt;6)-beta-D-Glc)-sn-glycerol + UDP + H(+). It carries out the reaction a 1,2-diacyl-sn-glycerol + UDP-alpha-D-glucose = a 1,2-diacyl-3-O-(beta-D-glucopyranosyl)-sn-glycerol + UDP + H(+). Its pathway is glycolipid metabolism; diglucosyl-diacylglycerol biosynthesis. Processive glucosyltransferase involved in the biosynthesis of both the bilayer- and non-bilayer-forming membrane glucolipids. Is able to successively transfer two glucosyl residues to diacylglycerol (DAG), thereby catalyzing the formation of beta-monoglucosyl-DAG (3-O-(beta-D-glucopyranosyl)-1,2-diacyl-sn-glycerol) and beta-diglucosyl-DAG (3-O-(beta-D-glucopyranosyl-beta-(1-&gt;6)-D-glucopyranosyl)-1,2-diacyl-sn-glycerol). Beta-diglucosyl-DAG is the predominant glycolipid found in Bacillales and is also used as a membrane anchor for lipoteichoic acid (LTA). The chain is Processive diacylglycerol beta-glucosyltransferase from Staphylococcus epidermidis (strain ATCC 35984 / DSM 28319 / BCRC 17069 / CCUG 31568 / BM 3577 / RP62A).